Reading from the N-terminus, the 88-residue chain is Small ribosomal subunit protein bS20 (88 aa).

Belongs to the bacterial ribosomal protein bS20 family.

In terms of biological role, binds directly to 16S ribosomal RNA. This chain is Small ribosomal subunit protein bS20, found in Clostridium botulinum (strain 657 / Type Ba4).